The chain runs to 681 residues: tRNA wybutosine-synthesizing protein 4 (681 aa).

A compositionally biased stretch (basic residues) spans 1–11; it reads MSNKNQRKTKS. Positions 1–21 are disordered; it reads MSNKNQRKTKSKDREVRKTND. S-adenosyl-L-methionine-binding positions include arginine 66, glycine 92, aspartate 119, 165-166, and glutamate 193; that span reads NL.

It belongs to the methyltransferase superfamily. LCMT family.

The enzyme catalyses 7-[(3S)-3-amino-3-carboxypropyl]wyosine(37) in tRNA(Phe) + S-adenosyl-L-methionine = 7-[(3S)-(3-amino-3-methoxycarbonyl)propyl]wyosine(37) in tRNA(Phe) + S-adenosyl-L-homocysteine. It carries out the reaction 7-[(3S)-(3-amino-3-methoxycarbonyl)propyl]wyosine(37) in tRNA(Phe) + S-adenosyl-L-methionine + CO2 = wybutosine(37) in tRNA(Phe) + S-adenosyl-L-homocysteine + 2 H(+). Its pathway is tRNA modification; wybutosine-tRNA(Phe) biosynthesis. In terms of biological role, probable S-adenosyl-L-methionine-dependent methyltransferase that acts as a component of the wybutosine biosynthesis pathway. Wybutosine is a hyper modified guanosine with a tricyclic base found at the 3'-position adjacent to the anticodon of eukaryotic phenylalanine tRNA. May methylate the carboxyl group of leucine residues to form alpha-leucine ester residues. This is tRNA wybutosine-synthesizing protein 4 (ppm2) from Schizosaccharomyces pombe (strain 972 / ATCC 24843) (Fission yeast).